A 518-amino-acid polypeptide reads, in one-letter code: Putative succinate-semialdehyde dehydrogenase [NADP(+)] 2 (518 aa).

NADP(+) is bound by residues 157–158 (WN), 181–184 (KPDS), and 232–233 (GS). Glu254 acts as the Proton acceptor in catalysis. An NADP(+)-binding site is contributed by Leu255. Residue Cys288 is the Nucleophile of the active site. Glu386 contributes to the NADP(+) binding site.

This sequence belongs to the aldehyde dehydrogenase family.

The catalysed reaction is succinate semialdehyde + NADP(+) + H2O = succinate + NADPH + 2 H(+). Functionally, catalyzes the NADP(+)-dependent oxidation of succinate semialdehyde to succinate. Although it has succinate semialdehyde dehydrogenase activity, is likely to act physiologically on a different aldehyde(s). In Mycobacterium ulcerans (strain Agy99), this protein is Putative succinate-semialdehyde dehydrogenase [NADP(+)] 2 (gabD2).